Here is a 538-residue protein sequence, read N- to C-terminus: MSKIIEYDETARRAIEAGVNTLADAVRVTLGPRGRHVVLAKAFGGPAVTNDGVTVAREIDLEDPFENLGAQLVKSVATKTNDVAGDGTTTATVLAQALVKGGLRLVAAGANPIELGAGISKAADAVSEALLASATTVSGKDAIAQVATVSSRDQVLGELVGEAMTKVGVDGVVSVEESSTLNTELEFTEGVGFDKGFLSAYFVTDFDAQQAVLDDPVILLHQEKISSLPDLLPMLEKVAESGKPLLIIAEDIEGEALATLVVNSIRKTLKAVAVKAPFFGDRRKAFLEDLAIVTGGQVINPDTGLLLREVGTEVLGSARRVVVSKDDTIIVDGGGAKDAVANRIKQLRAEIEKTDSDWDREKLQERLAKLAGGVAVIKVGAATETALKERKESVEDAVAAAKAAVEEGIVAGGGSALLQARKALDELRGSLSGDQALGVDVFAEALGAPLYWIASNAGLDGAVAVHKVAELPAGHGLNAEKLSYGDLIADGVIDPVKVTRSAVLNSASVARMVLTTETAVVDKPAEEADDHGHGHHHH.

Residues 29–32, 86–90, Gly413, and Asp494 each bind ATP; these read TLGP and DGTTT.

The protein belongs to the chaperonin (HSP60) family. Forms a cylinder of 14 subunits composed of two heptameric rings stacked back-to-back. Interacts with the co-chaperonin GroES.

It is found in the cytoplasm. It catalyses the reaction ATP + H2O + a folded polypeptide = ADP + phosphate + an unfolded polypeptide.. Its function is as follows. Together with its co-chaperonin GroES, plays an essential role in assisting protein folding. The GroEL-GroES system forms a nano-cage that allows encapsulation of the non-native substrate proteins and provides a physical environment optimized to promote and accelerate protein folding. In Mycobacterium avium (strain 104), this protein is Chaperonin GroEL 1.